A 378-amino-acid polypeptide reads, in one-letter code: Putative gustatory receptor 22f (378 aa).

The Cytoplasmic segment spans residues methionine 1–histidine 13. Residues leucine 14 to phenylalanine 34 form a helical membrane-spanning segment. At threonine 35 to tryptophan 48 the chain is on the extracellular side. Residues leucine 49–leucine 69 form a helical membrane-spanning segment. At alanine 70–lysine 88 the chain is on the cytoplasmic side. A helical membrane pass occupies residues isoleucine 89–valine 109. Residues tryptophan 110–cysteine 143 lie on the Extracellular side of the membrane. Residues phenylalanine 144–leucine 164 traverse the membrane as a helical segment. Over cysteine 165 to cysteine 178 the chain is Cytoplasmic. Residues cysteine 179 to valine 199 form a helical membrane-spanning segment. The Extracellular portion of the chain corresponds to tyrosine 200–glutamine 245. A glycan (N-linked (GlcNAc...) asparagine) is linked at asparagine 207. A helical transmembrane segment spans residues leucine 246–valine 266. The Cytoplasmic portion of the chain corresponds to leucine 267–asparagine 354. A helical membrane pass occupies residues methionine 355–phenylalanine 375. Topologically, residues methionine 376 to leucine 378 are extracellular.

It belongs to the insect chemoreceptor superfamily. Gustatory receptor (GR) family. Gr22e subfamily. Taste bristles in the foreleg and labial palps.

The protein localises to the cell membrane. Its function is as follows. Probable gustatory receptor which mediates acceptance or avoidance behavior, depending on its substrates. This is Putative gustatory receptor 22f (Gr22f) from Drosophila melanogaster (Fruit fly).